We begin with the raw amino-acid sequence, 1242 residues long: Receptor-type adenylate cyclase GRESAG 4.1 (1242 aa).

Residues 1–39 lie on the Cytoplasmic side of the membrane; that stretch reads MHWQEGGGRGCVYTHGNCRRNLTARALQALQHVEALTCH. A helical transmembrane segment spans residues 40–60; it reads YCVSLLHLLPLLLMWMPPVCA. The Extracellular segment spans residues 61–862; it reads DDSAVTVNVL…THTVTDSWNN (802 aa). Residues N116, N289, N318, N338, N401, N534, N563, N603, N702, N741, and N818 are each glycosylated (N-linked (GlcNAc...) asparagine). The helical transmembrane segment at 863–883 threads the bilayer; sequence FWVCIRLVIIYCPWCVPTHLP. Topologically, residues 884 to 1242 are cytoplasmic; sequence AERRNNNRAP…PFYDMHLQEY (359 aa). Positions 901–1056 constitute a Guanylate cyclase domain; it reads TLIFTDIESS…RTPNMAARTE (156 aa). Residues D906 and D949 each coordinate Mg(2+).

This sequence belongs to the adenylyl cyclase class-3 family. Mg(2+) serves as cofactor.

The protein localises to the membrane. It catalyses the reaction ATP = 3',5'-cyclic AMP + diphosphate. Functionally, could act as a receptor for an unknown ligand. The protein is Receptor-type adenylate cyclase GRESAG 4.1 (GRESAG 4.1) of Trypanosoma brucei brucei.